We begin with the raw amino-acid sequence, 325 residues long: CRISPR-associated endonuclease Cas1 3 (325 aa).

Mn(2+)-binding residues include E152, H217, and E232.

This sequence belongs to the CRISPR-associated endonuclease Cas1 family. Homodimer, forms a heterotetramer with a Cas2 homodimer. Mg(2+) is required as a cofactor. It depends on Mn(2+) as a cofactor.

CRISPR (clustered regularly interspaced short palindromic repeat), is an adaptive immune system that provides protection against mobile genetic elements (viruses, transposable elements and conjugative plasmids). CRISPR clusters contain spacers, sequences complementary to antecedent mobile elements, and target invading nucleic acids. CRISPR clusters are transcribed and processed into CRISPR RNA (crRNA). Acts as a dsDNA endonuclease. Involved in the integration of spacer DNA into the CRISPR cassette. This Thermodesulfovibrio yellowstonii (strain ATCC 51303 / DSM 11347 / YP87) protein is CRISPR-associated endonuclease Cas1 3.